Reading from the N-terminus, the 282-residue chain is Predicted GPI-anchored protein 23 (282 aa).

The first 18 residues, 1-18 (MRVSTLVLSTSIIPIATA), serve as a signal peptide directing secretion. The disordered stretch occupies residues 163–264 (GQETSGAGSL…SSNSSSSAGM (102 aa)). N-linked (GlcNAc...) asparagine glycans are attached at residues Asn-180, Asn-192, and Asn-257. Residues 186–216 (GGSGSSNGTSSGSGSGSGAGVGSGSGSGSGS) are compositionally biased toward gly residues. Low complexity predominate over residues 236–264 (LGISSSISQSTTRQLQTSGSSNSSSSAGM). A lipid anchor (GPI-anchor amidated serine) is attached at Ser-259. The propeptide at 260-282 (SSAGMGNVVVGMNAVALAALVLI) is removed in mature form.

The protein resides in the cell membrane. Probable cell surface protein involved in the process of adhesion and early events of invasion. This Candida albicans (strain SC5314 / ATCC MYA-2876) (Yeast) protein is Predicted GPI-anchored protein 23 (PGA23).